The primary structure comprises 1024 residues: Protein translocase subunit SecA (1024 aa).

ATP is bound by residues Gln-143, 161 to 165 (GEGKT), and Asp-661. Residues 970–1024 (HEEAGSVYNAQPDGEPESQASKQQPVVADHSKPGRNDLCPCGSGKKYKNCHGREA) form a disordered region. Cys-1008, Cys-1010, Cys-1019, and His-1020 together coordinate Zn(2+). A compositionally biased stretch (basic residues) spans 1014 to 1024 (KKYKNCHGREA).

The protein belongs to the SecA family. Monomer and homodimer. Part of the essential Sec protein translocation apparatus which comprises SecA, SecYEG and auxiliary proteins SecDF. Other proteins may also be involved. Zn(2+) is required as a cofactor.

The protein localises to the cell inner membrane. The protein resides in the cytoplasm. It catalyses the reaction ATP + H2O + cellular proteinSide 1 = ADP + phosphate + cellular proteinSide 2.. Part of the Sec protein translocase complex. Interacts with the SecYEG preprotein conducting channel. Has a central role in coupling the hydrolysis of ATP to the transfer of proteins into and across the cell membrane, serving as an ATP-driven molecular motor driving the stepwise translocation of polypeptide chains across the membrane. This Chlorobium luteolum (strain DSM 273 / BCRC 81028 / 2530) (Pelodictyon luteolum) protein is Protein translocase subunit SecA.